The primary structure comprises 295 residues: Phosphoribosylaminoimidazole-succinocarboxamide synthase (295 aa).

Belongs to the SAICAR synthetase family.

The enzyme catalyses 5-amino-1-(5-phospho-D-ribosyl)imidazole-4-carboxylate + L-aspartate + ATP = (2S)-2-[5-amino-1-(5-phospho-beta-D-ribosyl)imidazole-4-carboxamido]succinate + ADP + phosphate + 2 H(+). It functions in the pathway purine metabolism; IMP biosynthesis via de novo pathway; 5-amino-1-(5-phospho-D-ribosyl)imidazole-4-carboxamide from 5-amino-1-(5-phospho-D-ribosyl)imidazole-4-carboxylate: step 1/2. This chain is Phosphoribosylaminoimidazole-succinocarboxamide synthase, found in Nitrosomonas europaea (strain ATCC 19718 / CIP 103999 / KCTC 2705 / NBRC 14298).